Consider the following 749-residue polypeptide: Serine/threonine-protein phosphatase 4 regulatory subunit 3 (749 aa).

As to quaternary structure, regulatory subunit 3 (R3) of the histone H2A phosphatase complex (HTP-C) consisting of PPH3, PSY2 and PSY4.

It localises to the nucleus. Core regulatory subunit of the histone H2A phosphatase complex, which dephosphorylates H2AS128ph (gamma-H2A) that has been displaced from sites of DNA lesions in the double-stranded DNA break repair process. Dephosphorylation is necessary for efficient recovery from the DNA damage checkpoint. This is Serine/threonine-protein phosphatase 4 regulatory subunit 3 (PSY2) from Kluyveromyces lactis (strain ATCC 8585 / CBS 2359 / DSM 70799 / NBRC 1267 / NRRL Y-1140 / WM37) (Yeast).